We begin with the raw amino-acid sequence, 177 residues long: Large ribosomal subunit protein uL10 (177 aa).

The protein belongs to the universal ribosomal protein uL10 family. Part of the ribosomal stalk of the 50S ribosomal subunit. The N-terminus interacts with L11 and the large rRNA to form the base of the stalk. The C-terminus forms an elongated spine to which L12 dimers bind in a sequential fashion forming a multimeric L10(L12)X complex.

Functionally, forms part of the ribosomal stalk, playing a central role in the interaction of the ribosome with GTP-bound translation factors. In Xanthomonas oryzae pv. oryzae (strain MAFF 311018), this protein is Large ribosomal subunit protein uL10.